The sequence spans 274 residues: 2-dehydro-3-deoxyphosphooctonate aldolase (274 aa).

It belongs to the KdsA family.

It localises to the cytoplasm. It carries out the reaction D-arabinose 5-phosphate + phosphoenolpyruvate + H2O = 3-deoxy-alpha-D-manno-2-octulosonate-8-phosphate + phosphate. It participates in carbohydrate biosynthesis; 3-deoxy-D-manno-octulosonate biosynthesis; 3-deoxy-D-manno-octulosonate from D-ribulose 5-phosphate: step 2/3. Its pathway is bacterial outer membrane biogenesis; lipopolysaccharide biosynthesis. In Rickettsia felis (strain ATCC VR-1525 / URRWXCal2) (Rickettsia azadi), this protein is 2-dehydro-3-deoxyphosphooctonate aldolase.